A 194-amino-acid chain; its full sequence is MNLIPTVIEQTNRGERAYDIYSRLLKDRIIMLGTAIDDNVANSIVAQLLFLQAEDPDKDISLYINSPGGSITAGMAIYDTMQYIKPNVSTICIGMAASMGAFLLAAGAKGKRFALPNSEVMIHQPLGGTRGQASDIEIHTRRILEMRETLNRILAERTGQPLEQIAKDTDRDNFMTAEKAREYGLIDKVIETTK.

The Nucleophile role is filled by S98. Residue H123 is part of the active site.

This sequence belongs to the peptidase S14 family. Fourteen ClpP subunits assemble into 2 heptameric rings which stack back to back to give a disk-like structure with a central cavity, resembling the structure of eukaryotic proteasomes.

The protein localises to the cytoplasm. It catalyses the reaction Hydrolysis of proteins to small peptides in the presence of ATP and magnesium. alpha-casein is the usual test substrate. In the absence of ATP, only oligopeptides shorter than five residues are hydrolyzed (such as succinyl-Leu-Tyr-|-NHMec, and Leu-Tyr-Leu-|-Tyr-Trp, in which cleavage of the -Tyr-|-Leu- and -Tyr-|-Trp bonds also occurs).. Cleaves peptides in various proteins in a process that requires ATP hydrolysis. Has a chymotrypsin-like activity. Plays a major role in the degradation of misfolded proteins. ClpXP1 is involved in the complete degradation of the Site-2 clipped anti-sigma-W factor RsiW. This results in the release of SigW and the transcription activation of the genes under the control of the sigma-W factor. The chain is ATP-dependent Clp protease proteolytic subunit 1 from Halalkalibacterium halodurans (strain ATCC BAA-125 / DSM 18197 / FERM 7344 / JCM 9153 / C-125) (Bacillus halodurans).